We begin with the raw amino-acid sequence, 1883 residues long: Transmembrane protein 131 (1883 aa).

The first 22 residues, 1 to 22 (MGKRAGGGATGATTAAVSTSAG), serve as a signal peptide directing secretion. The Lumenal segment spans residues 23 to 1117 (AGLEPAAARS…AEALPRPNWE (1095 aa)). The interval 109–283 (RFEPPMLDFH…ETKGVMRASF (175 aa)) is papD-L domain. Asparagine 300 is a glycosylation site (N-linked (GlcNAc...) asparagine). Phosphoserine is present on serine 803. Residues 1118–1138 (LALYIIISGIMSALFLLVIGT) traverse the membrane as a helical segment. The Cytoplasmic segment spans residues 1139 to 1883 (AYLEAQGIWE…WSNSHFPHEN (745 aa)). 5 disordered regions span residues 1198-1580 (GAGG…DSLY), 1593-1656 (LKQR…KNGN), 1670-1712 (PGGN…PVSN), 1766-1789 (WESP…HTAT), and 1832-1858 (MGTE…TYNP). Residues 1237 to 1261 (AKNSSSTSSRTSAQAASSQSANKTS) are compositionally biased toward low complexity. Over residues 1302–1316 (PQPPLPPPVPQPQEP) the composition is skewed to pro residues. Serine 1322 and serine 1342 each carry phosphoserine. Composition is skewed to basic and acidic residues over residues 1330–1343 (SHPE…HSSE) and 1353–1364 (AMDKDFDHHDSP). Position 1375 is a phosphoserine (serine 1375). Residues 1380 to 1394 (SKGKGKPLQRKVKPP) show a composition bias toward basic residues. A compositionally biased stretch (basic and acidic residues) spans 1395–1417 (KKQEEKEKKGKGKPQEDELKDSL). The span at 1423–1434 (SSTTTETSNPDT) shows a compositional bias: low complexity. Residues 1436–1458 (PLLKEDTEKQKGKQAMPEKHESE) show a composition bias toward basic and acidic residues. Polar residues-rich tracts occupy residues 1510–1526 (AMTS…TKGT) and 1542–1553 (PNSQELGNTSSS). Residues 1602–1611 (PASPSPPAAP) are compositionally biased toward pro residues. Residues 1619 to 1630 (SYSSIVNSSSSS) show a composition bias toward low complexity. Polar residues predominate over residues 1678-1690 (VSSNKTGFSSSLG). 2 stretches are compositionally biased toward low complexity: residues 1773 to 1784 (PSPSWPASSGSP) and 1837 to 1849 (SPAP…SSPA). A phosphoserine mark is found at serine 1863 and serine 1871.

Belongs to the TMEM131 family. In terms of assembly, interacts (via PapD-L domain) with COL1A2 (via C-terminus); the interaction is direct, may occur with other collagen proteins, and is involved in assembly and TRAPPIII ER-to-Golgi transport complex-dependent secretion of collagen. Interacts (via C-terminus) with TRAPPC8 (via C-terminus); the interaction is direct.

It localises to the membrane. Collagen binding transmembrane protein involved in collagen secretion by recruiting the ER-to-Golgi transport complex TRAPPIII. May play a role in the immune response to viral infection. This chain is Transmembrane protein 131, found in Homo sapiens (Human).